The primary structure comprises 163 residues: Type-1 angiotensin II receptor-associated protein-like (163 aa).

Residues 1-28 (MELPAVNLKAIVFTHWLLTVFACMIDWL) are Extracellular-facing. The helical transmembrane segment at 29–49 (PKAYGLANITILAMGVWAIAQ) threads the bilayer. Residues 50–55 (RDSIDA) are Cytoplasmic-facing. A helical transmembrane segment spans residues 56–76 (IFMFLIGLLLTILTDILLFAL). The Extracellular portion of the chain corresponds to 77–95 (YFTEAEKASESGPLRDLFR). A helical transmembrane segment spans residues 96-116 (FSSGMGIFSLLLKPLSCFFMY). The Cytoplasmic portion of the chain corresponds to 117–163 (HMYRERGGEYFVNLGFITLSRDRSSYQSIEHMDPPADQDNKLPSRTY).

The protein localises to the membrane. Functionally, appears to be a negative regulator of angiotensin II type I receptor-mediated signaling. The chain is Type-1 angiotensin II receptor-associated protein-like (agtrap) from Xenopus tropicalis (Western clawed frog).